The chain runs to 89 residues: Putative acyl-CoA-binding protein (89 aa).

The ACB domain occupies 3-88 (VEEQFKTSAE…VKELVEKNGL (86 aa)). An acyl-CoA contacts are provided by residues lysine 15, 30 to 34 (YSLYK), lysine 52, lysine 56, and tyrosine 75.

This sequence belongs to the ACBP family.

Binds medium- and long-chain acyl-CoA esters with very high affinity and may function as an intracellular carrier of acyl-CoA esters. The polypeptide is Putative acyl-CoA-binding protein (Hypsibius exemplaris (Freshwater tardigrade)).